A 199-amino-acid chain; its full sequence is Potassium-transporting ATPase KdpC subunit (199 aa).

Residues 21–43 traverse the membrane as a helical segment; it reads LALLFVCGVVYTGTVTQLGGALF.

It belongs to the KdpC family. In terms of assembly, the system is composed of three essential subunits: KdpA, KdpB and KdpC.

Its subcellular location is the cell inner membrane. Part of the high-affinity ATP-driven potassium transport (or Kdp) system, which catalyzes the hydrolysis of ATP coupled with the electrogenic transport of potassium into the cytoplasm. This subunit acts as a catalytic chaperone that increases the ATP-binding affinity of the ATP-hydrolyzing subunit KdpB by the formation of a transient KdpB/KdpC/ATP ternary complex. In Shewanella putrefaciens (strain CN-32 / ATCC BAA-453), this protein is Potassium-transporting ATPase KdpC subunit.